Consider the following 420-residue polypeptide: Gamma-glutamyl phosphate reductase (420 aa).

This sequence belongs to the gamma-glutamyl phosphate reductase family.

The protein resides in the cytoplasm. The catalysed reaction is L-glutamate 5-semialdehyde + phosphate + NADP(+) = L-glutamyl 5-phosphate + NADPH + H(+). It participates in amino-acid biosynthesis; L-proline biosynthesis; L-glutamate 5-semialdehyde from L-glutamate: step 2/2. In terms of biological role, catalyzes the NADPH-dependent reduction of L-glutamate 5-phosphate into L-glutamate 5-semialdehyde and phosphate. The product spontaneously undergoes cyclization to form 1-pyrroline-5-carboxylate. The sequence is that of Gamma-glutamyl phosphate reductase from Shewanella denitrificans (strain OS217 / ATCC BAA-1090 / DSM 15013).